We begin with the raw amino-acid sequence, 167 residues long: MTAEDLPYRPCVGVMVLNRQGLVWAGHRLAVGNSEYDGSPQLWQMPQGGIDEGEDPLEAACRELYEETGIRSVSLLAEAPDWIHYDLPSHLIGIGLKGKYRGQRQRWYAFRFEGDESEIAINPPPGGHEPEFDAWEWKPMHELPGSIVPFKRRAYEEVVAAFSHLVR.

Residues 7-160 enclose the Nudix hydrolase domain; that stretch reads PYRPCVGVMV…KRRAYEEVVA (154 aa). Residues 48-69 carry the Nudix box motif; it reads GGIDEGEDPLEAACRELYEETG.

This sequence belongs to the Nudix hydrolase family. RppH subfamily. The cofactor is a divalent metal cation.

Accelerates the degradation of transcripts by removing pyrophosphate from the 5'-end of triphosphorylated RNA, leading to a more labile monophosphorylated state that can stimulate subsequent ribonuclease cleavage. The sequence is that of RNA pyrophosphohydrolase from Rhizobium meliloti (strain 1021) (Ensifer meliloti).